We begin with the raw amino-acid sequence, 344 residues long: L-lactate dehydrogenase B (344 aa).

NAD(+) is bound by residues 62–67 (DALPDK) and arginine 109. The substrate site is built by arginine 116, asparagine 148, and arginine 179. Asparagine 148 is an NAD(+) binding site. The active-site Proton acceptor is the histidine 203. A substrate-binding site is contributed by threonine 258.

This sequence belongs to the LDH/MDH superfamily. LDH family. In terms of assembly, tetramer that arise from random association of LDH-A and LDH-B.

The catalysed reaction is (S)-lactate + NAD(+) = pyruvate + NADH + H(+). The protein operates within fermentation; pyruvate fermentation to lactate; (S)-lactate from pyruvate: step 1/1. In Hordeum vulgare (Barley), this protein is L-lactate dehydrogenase B.